A 483-amino-acid chain; its full sequence is Probable zinc metalloprotease PTRG_04977 (483 aa).

An N-terminal signal peptide occupies residues 1 to 18 (MLFRSALLSNVLLLPACA). N-linked (GlcNAc...) asparagine glycans are attached at residues Asn-96 and Asn-121. Residues His-167, Asp-187, and Glu-220 each coordinate Zn(2+). A glycan (N-linked (GlcNAc...) asparagine) is linked at Asn-235. Residue Asp-247 coordinates Zn(2+). 5 N-linked (GlcNAc...) asparagine glycosylation sites follow: Asn-310, Asn-362, Asn-401, Asn-411, and Asn-421. A Fibronectin type-III domain is found at 396-483 (PAMPRNVTID…KSPAVYPFPG (88 aa)).

Belongs to the peptidase M28 family. M28B subfamily. It depends on Zn(2+) as a cofactor.

It localises to the secreted. This Pyrenophora tritici-repentis (strain Pt-1C-BFP) (Wheat tan spot fungus) protein is Probable zinc metalloprotease PTRG_04977.